Reading from the N-terminus, the 298-residue chain is Lipoyl synthase 1 (298 aa).

The [4Fe-4S] cluster site is built by Cys34, Cys39, Cys45, Cys60, Cys64, Cys67, and Ser274. One can recognise a Radical SAM core domain in the interval 46–263 (FYQGTATFLM…RRLGESMGFL (218 aa)).

This sequence belongs to the radical SAM superfamily. Lipoyl synthase family. The cofactor is [4Fe-4S] cluster.

The protein resides in the cytoplasm. The enzyme catalyses [[Fe-S] cluster scaffold protein carrying a second [4Fe-4S](2+) cluster] + N(6)-octanoyl-L-lysyl-[protein] + 2 oxidized [2Fe-2S]-[ferredoxin] + 2 S-adenosyl-L-methionine + 4 H(+) = [[Fe-S] cluster scaffold protein] + N(6)-[(R)-dihydrolipoyl]-L-lysyl-[protein] + 4 Fe(3+) + 2 hydrogen sulfide + 2 5'-deoxyadenosine + 2 L-methionine + 2 reduced [2Fe-2S]-[ferredoxin]. Its pathway is protein modification; protein lipoylation via endogenous pathway; protein N(6)-(lipoyl)lysine from octanoyl-[acyl-carrier-protein]: step 2/2. Its function is as follows. Catalyzes the radical-mediated insertion of two sulfur atoms into the C-6 and C-8 positions of the octanoyl moiety bound to the lipoyl domains of lipoate-dependent enzymes, thereby converting the octanoylated domains into lipoylated derivatives. This Thermosynechococcus vestitus (strain NIES-2133 / IAM M-273 / BP-1) protein is Lipoyl synthase 1.